Here is a 260-residue protein sequence, read N- to C-terminus: Serine protease VLSP-1 (260 aa).

The first 18 residues, M1–A18, serve as a signal peptide directing secretion. Residues Q19–L24 constitute a propeptide that is removed on maturation. The Peptidase S1 domain maps to V25–A251. 6 disulfide bridges follow: C31–C165, C52–C68, C100–C258, C144–C212, C176–C191, and C202–C227. The N-linked (GlcNAc...) asparagine glycan is linked to N44. The Charge relay system role is filled by H67. N103 is a glycosylation site (N-linked (GlcNAc...) asparagine). The Charge relay system role is filled by D112. N156 is a glycosylation site (N-linked (GlcNAc...) asparagine). Catalysis depends on S206, which acts as the Charge relay system.

It belongs to the peptidase S1 family. Snake venom subfamily. As to expression, expressed by the venom gland.

The protein localises to the secreted. Functionally, snake venom serine protease that may act in the hemostasis system of the prey. The polypeptide is Serine protease VLSP-1 (Macrovipera lebetinus (Levantine viper)).